Reading from the N-terminus, the 471-residue chain is UDP-N-acetylmuramate--L-alanine ligase (471 aa).

112–118 (GTHGKTT) lines the ATP pocket.

This sequence belongs to the MurCDEF family.

It localises to the cytoplasm. It carries out the reaction UDP-N-acetyl-alpha-D-muramate + L-alanine + ATP = UDP-N-acetyl-alpha-D-muramoyl-L-alanine + ADP + phosphate + H(+). It functions in the pathway cell wall biogenesis; peptidoglycan biosynthesis. Its function is as follows. Cell wall formation. The chain is UDP-N-acetylmuramate--L-alanine ligase from Aromatoleum aromaticum (strain DSM 19018 / LMG 30748 / EbN1) (Azoarcus sp. (strain EbN1)).